The chain runs to 263 residues: Ribonuclease HII (263 aa).

Positions 39–257 (AFFTGIDEAG…VKPAAAPHAA (219 aa)) constitute an RNase H type-2 domain. Residues D45, E46, and D157 each contribute to the a divalent metal cation site.

Belongs to the RNase HII family. It depends on Mn(2+) as a cofactor. Requires Mg(2+) as cofactor.

It is found in the cytoplasm. The catalysed reaction is Endonucleolytic cleavage to 5'-phosphomonoester.. Functionally, endonuclease that specifically degrades the RNA of RNA-DNA hybrids. This chain is Ribonuclease HII, found in Oleidesulfovibrio alaskensis (strain ATCC BAA-1058 / DSM 17464 / G20) (Desulfovibrio alaskensis).